Here is a 1040-residue protein sequence, read N- to C-terminus: MSRRNATSFVDNNTLTSSGISGSGSMSPPITSRPASGQASPLTSNGSLSPPQYADDQGSVSYNLDSPRDLSPLLLSELACLNMREVVARPGLGTIGRQIPVKSNFFAMDLKNPKMVVIQYHVEIHHPGCRKLDKDEMRIIFWKAVSDHPNIFHNKFALAYDGAHQLYTVARLEFPDDQGSVRLDCEASLPKDNRDRTRCAISIQNVGPVLLEMQRTRTNNLDERVLTPIQILDIICRQSLTCPLLKNSANFYTWKSSCYRIPTAAGQALDLEGGKEMWTGFFSSAHIASNYRPLLNIDVAHTAFYKTRITVLQFMCDVLNERTSKPNRNNPRGPGGPGGPGGYRGGRGGGRGGSYGNFGNRGPPGANVRDDFGGNGLTFTMDTLSRDTQLSSFETRIFGDAIRGMKIRAAHRPNAIRVYKVNSLQLPADKLMFQGIDEEGRQVVCSVADYFSEKYGPLKYPKLPCLHVGPPTRNIFLPMEHCLIDSPQKYNKKMSEKQTSAIIKAAAVDATQREDRIKQLAAQASFGTDPFLKEFGVAVSSQMIQTTARVIQPPPIMFGGNNRSVNPVVFPKDGSWTMDNQTLYMPATCRSYSMIALVDPRDQTSLQTFCQSLTMKATAMGMNFPRWPDLVKYGRSKEDVCTLFTEIADEYRVTNTVCDCIIVVLQSKNSDIYMTVKEQSDIVHGIMSQCVLMKNVSRPTPATCANIVLKLNMKMGGINSRIVADKITNKYLVDQPTMVVGIDVTHPTQAEMRMNMPSVAAIVANVDLLPQSYGANVKVQKKCRESVVYLLDAIRERIITFYRHTKQKPARIIVYRDGVSEGQFSEVLREEIQSIRTACLAIAEDFRPPITYIVVQKRHHARIFCKYQNDMVGKAKNVPPGTTVDTGIVSPEGFDFYLCSHYGVQGTSRPARYHVLLDECKFTADEIQSITYGMCHTYGRCTRSVSIPTPVYYADLVATRARCHVKRKLGLADNNDCDTNSRSSTLASLLNVRTGSGKGKKSYAPSVDDESYSLSDATSDQILQDCVSVATDFKSRMYFI.

Over residues 1 to 15 (MSRRNATSFVDNNTL) the composition is skewed to polar residues. Disordered regions lie at residues 1–61 (MSRR…GSVS) and 322–367 (RTSK…PGAN). The span at 16–32 (TSSGISGSGSMSPPITS) shows a compositional bias: low complexity. Positions 33 to 50 (RPASGQASPLTSNGSLSP) are enriched in polar residues. Over residues 333 to 356 (GPGGPGGPGGYRGGRGGGRGGSYG) the composition is skewed to gly residues. The 108-residue stretch at 379-486 (FTMDTLSRDT…LPMEHCLIDS (108 aa)) folds into the PAZ domain. Positions 660 to 966 (CIIVVLQSKN…VATRARCHVK (307 aa)) constitute a Piwi domain.

The sequence is that of Putative protein tag-76 (tag-76) from Caenorhabditis elegans.